The chain runs to 445 residues: Maltoporin (445 aa).

Residues 1–24 form the signal peptide; the sequence is MITLRKLPLAVAVAAGVMSAQAMA.

This sequence belongs to the porin LamB (TC 1.B.3) family. As to quaternary structure, homotrimer formed of three 18-stranded antiparallel beta-barrels, containing three independent channels.

The protein resides in the cell outer membrane. The catalysed reaction is beta-maltose(in) = beta-maltose(out). Involved in the transport of maltose and maltodextrins. This is Maltoporin from Shigella flexneri.